The primary structure comprises 251 residues: Mlc titration factor A (251 aa).

The Zn(2+) site is built by His111, His148, His152, and Glu211.

It belongs to the MtfA family. As to quaternary structure, interacts with Mlc. The cofactor is Zn(2+).

It is found in the cytoplasm. Functionally, involved in the modulation of the activity of the glucose-phosphotransferase system (glucose-PTS). Interacts with the transcriptional repressor Mlc, preventing its interaction with DNA and leading to the modulation of expression of genes regulated by Mlc, including ptsG, which encodes the PTS system glucose-specific EIICB component. In terms of biological role, shows zinc-dependent metallopeptidase activity. The chain is Mlc titration factor A from Salmonella arizonae (strain ATCC BAA-731 / CDC346-86 / RSK2980).